The sequence spans 293 residues: 4-hydroxy-tetrahydrodipicolinate synthase (293 aa).

Threonine 47 lines the pyruvate pocket. Tyrosine 136 acts as the Proton donor/acceptor in catalysis. Lysine 164 (schiff-base intermediate with substrate) is an active-site residue. Isoleucine 206 is a pyruvate binding site.

It belongs to the DapA family. As to quaternary structure, homotetramer; dimer of dimers.

Its subcellular location is the cytoplasm. The enzyme catalyses L-aspartate 4-semialdehyde + pyruvate = (2S,4S)-4-hydroxy-2,3,4,5-tetrahydrodipicolinate + H2O + H(+). It participates in amino-acid biosynthesis; L-lysine biosynthesis via DAP pathway; (S)-tetrahydrodipicolinate from L-aspartate: step 3/4. Its function is as follows. Catalyzes the condensation of (S)-aspartate-beta-semialdehyde [(S)-ASA] and pyruvate to 4-hydroxy-tetrahydrodipicolinate (HTPA). The protein is 4-hydroxy-tetrahydrodipicolinate synthase of Listeria welshimeri serovar 6b (strain ATCC 35897 / DSM 20650 / CCUG 15529 / CIP 8149 / NCTC 11857 / SLCC 5334 / V8).